The primary structure comprises 526 residues: Choline/ethanolamine transporter FLVCR2 (526 aa).

The segment at 1 to 70 is disordered; that stretch reads MVNEGPNQEE…PSGLAHPSSS (70 aa). Residues 1–76 lie on the Cytoplasmic side of the membrane; the sequence is MVNEGPNQEE…PSSSGPEDLS (76 aa). 1 to 84 is a binding site for heme b; it reads MVNEGPNQEE…LSVIKVSRRR (84 aa). 5 tandem repeats follow at residues 25 to 30, 31 to 36, 37 to 42, 43 to 48, and 49 to 54. A compositionally biased stretch (low complexity) spans 25–56; it reads PSVSVHPSVSVHPSVSINPSVSVHPSSSAHPS. The interval 25-72 is 8 X 6 AA tandem repeats of P-S-[VS]-S-[VIAG]-[HNP]; it reads PSVSVHPSVSVHPSVSINPSVSVHPSSSAHPSALAQPSGLAHPSSSGP. One copy of the 6; approximate repeat lies at 55 to 60; it reads PSALAQ. The stretch at 61–66 is one 7; approximate repeat; sequence PSGLAH. Repeat unit 8 spans residues 67-72; the sequence is PSSSGP. A helical membrane pass occupies residues 77 to 101; the sequence is VIKVSRRRWAVVLVFSCYSMCNSFQ. Choline-binding residues include Asn98 and Trp102. The Extracellular segment spans residues 102-119; it reads WIQYGSINNIFMHFYGVS. The chain crosses the membrane as a helical span at residues 120-147; the sequence is AFAIDWLSMCYMLTYIPLLLPVAWLLEK. Residues 148–149 lie on the Cytoplasmic side of the membrane; sequence FG. The chain crosses the membrane as a helical span at residues 150–169; sequence LRTIALTGSALNCLGAWVKL. Topologically, residues 170–176 are extracellular; the sequence is GSLKPHL. A helical membrane pass occupies residues 177–205; that stretch reads FPVTVVGQLICSVAQVFILGMPSRIASVW. Choline contacts are provided by Gln191 and Leu195. The Cytoplasmic segment spans residues 206–210; that stretch reads FGANE. Residues 211 to 236 traverse the membrane as a helical segment; that stretch reads VSTACSVAVFGNQLGIAIGFLVPPVL. Over 237 to 241 the chain is Extracellular; it reads VPNIE. The chain crosses the membrane as a helical span at residues 242 to 271; it reads DRDELAYHISIMFYIIGGVATLLLILVIIV. Residues 272 to 307 are Cytoplasmic-facing; it reads FKEKPKYPPSRAQSLSYALTSPDASYLGSIARLFKN. Residues 308–338 traverse the membrane as a helical segment; the sequence is LNFVLLVITYGLNAGAFYALSTLLNRMVIWH. Tyr325 is a binding site for choline. Over 339 to 342 the chain is Extracellular; that stretch reads YPGE. A helical transmembrane segment spans residues 343–371; sequence EVNAGRIGLTIVIAGMLGAVISGIWLDRS. Over 372–373 the chain is Cytoplasmic; it reads KT. Residues 374–396 form a helical membrane-spanning segment; sequence YKETTLVVYIMTLVGMVVYTFTL. Residues 397–399 are Extracellular-facing; that stretch reads NLG. Residues 400 to 429 traverse the membrane as a helical segment; sequence HLWVVFITAGTMGFFMTGYLPLGFEFAVEL. Topologically, residues 430–437 are cytoplasmic; that stretch reads TYPESEGI. The helical transmembrane segment at 438–463 threads the bilayer; the sequence is SSGLLNISAQVFGIIFTISQGQIIDN. Gln447 is a choline binding site. Topologically, residues 464–465 are extracellular; that stretch reads YG. The chain crosses the membrane as a helical span at residues 466 to 488; sequence TKPGNIFLCVFLTLGAALTAFIK. The Cytoplasmic segment spans residues 489-526; that stretch reads ADLRRQKANKETLENKLQEEEEESNTSKVPTAVSEDHL. The segment at 500–526 is disordered; it reads TLENKLQEEEEESNTSKVPTAVSEDHL. At Ser515 the chain carries Phosphoserine.

This sequence belongs to the major facilitator superfamily. Feline leukemia virus subgroup C receptor (TC 2.A.1.28.1) family. As to quaternary structure, interacts with components of electron transfer chain complexes III, IV and V including CYC1, NDUFA4, COX4I1, ATP5PD and ATP5F1C; these interactions occur in the absence of heme and are disrupted upon heme binding. Interacts with ATP2A2; this interaction occurs in the absence of heme and promotes ATP2A2 proteasomal degradation; the complex is dissociated upon heme binding. Interacts with HMOX1; this interaction is potentiated in the presence of heme. Expressed in non-hematopoietic tissues, with relative abundant expression in brain, placenta, lung, liver and kidney. Also expressed in hematopoietic tissues (fetal liver, spleen, lymph node, thymus, leukocytes and bone marrow). Found in acidophil cells of the pituitary that secrete growth hormone and prolactin (at protein level).

The protein localises to the cell membrane. Its subcellular location is the mitochondrion membrane. The protein resides in the endoplasmic reticulum membrane. It carries out the reaction choline(out) = choline(in). The enzyme catalyses ethanolamine(in) = ethanolamine(out). The catalysed reaction is heme b(in) = heme b(out). Its function is as follows. Choline uniporter that specifically mediates choline uptake at the blood-brain-barrier. Responsible for the majority of choline uptake across the blood-brain-barrier from the circulation into the brain. Choline, a nutrient critical for brain development, is a precursor of phosphatidylcholine, as well as betaine. Also mediates transport of ethanolamine. Choline and ethanolamine transport is not coupled with proton transport and is exclusively driven by the choline gradient across the plasma membrane. However, the presence of an inwardly directed proton gradient enhances choline uptake. Also acts as a heme b transporter. Required to regulate mitochondrial respiration processes, ATP synthesis and thermogenesis. At low heme levels, interacts with components of electron transfer chain (ETC) complexes and ATP2A2, leading to ubiquitin-mediated degradation of ATP2A2 and inhibition of thermogenesis. Upon heme binding, dissociates from ETC complexes to allow switching from mitochondrial ATP synthesis to thermogenesis. This Homo sapiens (Human) protein is Choline/ethanolamine transporter FLVCR2.